The primary structure comprises 280 residues: Chlorophyll a-b binding protein CP26, chloroplastic (280 aa).

Residues 1–48 (MASLGVSEMLGTPLNFRAVSRSSAPLASSPSTFKTVALFSKKKPAPAK) constitute a chloroplast transit peptide. Residue Phe-70 participates in chlorophyll b binding. Residues Tyr-95, Glu-114, and His-117 each coordinate chlorophyll a. The next 2 membrane-spanning stretches (helical) occupy residues 110 to 130 (YQAF…GFII) and 167 to 187 (IPIN…GAEY). Residues Arg-119, Ile-167, Glu-186, and Arg-189 each coordinate chlorophyll b. Chlorophyll a is bound by residues Lys-224, Glu-225, Asn-228, Arg-230, Gln-242, and His-257. Residues 231–251 (LAMFAMLGFFIQAYVTGEGPV) traverse the membrane as a helical segment.

This sequence belongs to the light-harvesting chlorophyll a/b-binding (LHC) protein family. As to quaternary structure, forms heterotrimers with LHCB3. The LHC complex consists of chlorophyll a-b binding proteins. It depends on Binds at least 14 chlorophylls (8 Chl-a and 6 Chl-b) and carotenoids such as lutein and neoxanthin. as a cofactor. Photoregulated by reversible phosphorylation of its threonine residues.

Its subcellular location is the plastid. It localises to the chloroplast thylakoid membrane. Functionally, the light-harvesting complex (LHC) functions as a light receptor, it captures and delivers excitation energy to photosystems with which it is closely associated. This chain is Chlorophyll a-b binding protein CP26, chloroplastic (LHCB5), found in Arabidopsis thaliana (Mouse-ear cress).